A 254-amino-acid polypeptide reads, in one-letter code: Thiazole synthase (254 aa).

Lysine 95 acts as the Schiff-base intermediate with DXP in catalysis. 1-deoxy-D-xylulose 5-phosphate-binding positions include glycine 156, 182–183 (AG), and 204–205 (NT).

This sequence belongs to the ThiG family. Homotetramer. Forms heterodimers with either ThiH or ThiS.

Its subcellular location is the cytoplasm. It carries out the reaction [ThiS sulfur-carrier protein]-C-terminal-Gly-aminoethanethioate + 2-iminoacetate + 1-deoxy-D-xylulose 5-phosphate = [ThiS sulfur-carrier protein]-C-terminal Gly-Gly + 2-[(2R,5Z)-2-carboxy-4-methylthiazol-5(2H)-ylidene]ethyl phosphate + 2 H2O + H(+). It participates in cofactor biosynthesis; thiamine diphosphate biosynthesis. Its function is as follows. Catalyzes the rearrangement of 1-deoxy-D-xylulose 5-phosphate (DXP) to produce the thiazole phosphate moiety of thiamine. Sulfur is provided by the thiocarboxylate moiety of the carrier protein ThiS. In vitro, sulfur can be provided by H(2)S. This chain is Thiazole synthase, found in Shewanella baltica (strain OS195).